The sequence spans 243 residues: Uridylate kinase (243 aa).

ATP is bound at residue 12 to 15 (KLSG). Residues 20 to 25 (GPGGSG) form an involved in allosteric activation by GTP region. Residue glycine 56 coordinates UMP. Residues glycine 57 and arginine 61 each coordinate ATP. Residues aspartate 76 and 137 to 144 (TGSPYFST) each bind UMP. Residues asparagine 165, tyrosine 171, and aspartate 174 each contribute to the ATP site.

The protein belongs to the UMP kinase family. In terms of assembly, homohexamer.

It is found in the cytoplasm. It carries out the reaction UMP + ATP = UDP + ADP. The protein operates within pyrimidine metabolism; CTP biosynthesis via de novo pathway; UDP from UMP (UMPK route): step 1/1. Its activity is regulated as follows. Allosterically activated by GTP. Inhibited by UTP. Catalyzes the reversible phosphorylation of UMP to UDP. The chain is Uridylate kinase from Oenococcus oeni (strain ATCC BAA-331 / PSU-1).